Here is a 95-residue protein sequence, read N- to C-terminus: Aspartyl/glutamyl-tRNA(Asn/Gln) amidotransferase subunit C (95 aa).

Belongs to the GatC family. In terms of assembly, heterotrimer of A, B and C subunits.

The enzyme catalyses L-glutamyl-tRNA(Gln) + L-glutamine + ATP + H2O = L-glutaminyl-tRNA(Gln) + L-glutamate + ADP + phosphate + H(+). It carries out the reaction L-aspartyl-tRNA(Asn) + L-glutamine + ATP + H2O = L-asparaginyl-tRNA(Asn) + L-glutamate + ADP + phosphate + 2 H(+). Allows the formation of correctly charged Asn-tRNA(Asn) or Gln-tRNA(Gln) through the transamidation of misacylated Asp-tRNA(Asn) or Glu-tRNA(Gln) in organisms which lack either or both of asparaginyl-tRNA or glutaminyl-tRNA synthetases. The reaction takes place in the presence of glutamine and ATP through an activated phospho-Asp-tRNA(Asn) or phospho-Glu-tRNA(Gln). This Pelagibacter ubique (strain HTCC1062) protein is Aspartyl/glutamyl-tRNA(Asn/Gln) amidotransferase subunit C.